We begin with the raw amino-acid sequence, 109 residues long: UPF0235 protein MA_4097 (109 aa).

The protein belongs to the UPF0235 family.

This Methanosarcina acetivorans (strain ATCC 35395 / DSM 2834 / JCM 12185 / C2A) protein is UPF0235 protein MA_4097.